The sequence spans 235 residues: MTITLAELLESGVHFGHQARRWNPKMFPYIYAERNGIHIIDLVQTAQLLTEACEFVKKSAEEGKKFLFVGTKRQAASIIAQEAERCGAFYINQRWLGGILTNWFTIRTRVERLKDLELKEETGYLDKLPKKEAAGLRRELEKLKRNLNGIKNMKRLPDLVVIVDQKRETTAVQECRTLGIPIISILDTNCNPDLTDIAIPGNDDAIRSIKLIITKLTDSICEGSLGYDENNSDHE.

This sequence belongs to the universal ribosomal protein uS2 family.

Its subcellular location is the plastid. It is found in the chloroplast. This is Small ribosomal subunit protein uS2c (rps2) from Guillardia theta (Cryptophyte).